The sequence spans 72 residues: VKRPMNAFMVWSQHERRKIMDQWPDMHNAEISKRLGRRWQLLQDSEKIPFVKEAGGLRLKHMADYPDYKYRP.

Positions 1-69 (VKRPMNAFMV…KHMADYPDYK (69 aa)) form a DNA-binding region, HMG box.

The protein resides in the nucleus. The protein is SRY-related protein ADW5 of Alligator mississippiensis (American alligator).